The chain runs to 442 residues: Myb family transcription factor PHL13 (442 aa).

Residues 235-295 enclose the HTH myb-type domain; it reads MTSKQRMRWT…HLQKYRTARY (61 aa). The segment at residues 266-291 is a DNA-binding region (H-T-H motif); it reads PKAVLKLINSPGLTVYHVKSHLQKYR. The tract at residues 329 to 349 is coiled coil; the sequence is TEALRLQMKVQKQLHEQLEIQ. The LHEQLE motif lies at 342 to 347; sequence LHEQLE. A compositionally biased stretch (basic and acidic residues) spans 370-380; it reads QQKMQENKKDS. Residues 370–442 form a disordered region; the sequence is QQKMQENKKD…TSNRKRVRED (73 aa). Residues 395–434 are compositionally biased toward polar residues; it reads SPNLSQPFLHKATNSEPSITQKLQNGSSTMDQSESTSGTS.

It belongs to the MYB-CC family.

It localises to the nucleus. The polypeptide is Myb family transcription factor PHL13 (Arabidopsis thaliana (Mouse-ear cress)).